Reading from the N-terminus, the 113-residue chain is Large ribosomal subunit protein bL19 (113 aa).

Belongs to the bacterial ribosomal protein bL19 family.

This protein is located at the 30S-50S ribosomal subunit interface and may play a role in the structure and function of the aminoacyl-tRNA binding site. This is Large ribosomal subunit protein bL19 from Nocardia farcinica (strain IFM 10152).